A 91-amino-acid chain; its full sequence is uncharacterized protein (91 aa).

This is an uncharacterized protein from Archaeoglobus fulgidus (strain ATCC 49558 / DSM 4304 / JCM 9628 / NBRC 100126 / VC-16).